Here is a 138-residue protein sequence, read N- to C-terminus: 1,4-dihydroxy-2-naphthoyl-CoA hydrolase (138 aa).

Asp14 is a catalytic residue.

The protein belongs to the 4-hydroxybenzoyl-CoA thioesterase family. DHNA-CoA hydrolase subfamily.

It catalyses the reaction 1,4-dihydroxy-2-naphthoyl-CoA + H2O = 1,4-dihydroxy-2-naphthoate + CoA + H(+). It functions in the pathway cofactor biosynthesis; phylloquinone biosynthesis. Its pathway is quinol/quinone metabolism; 1,4-dihydroxy-2-naphthoate biosynthesis; 1,4-dihydroxy-2-naphthoate from chorismate: step 7/7. In terms of biological role, catalyzes the hydrolysis of 1,4-dihydroxy-2-naphthoyl-CoA (DHNA-CoA) to 1,4-dihydroxy-2-naphthoate (DHNA), a reaction involved in phylloquinone (vitamin K1) biosynthesis. This is 1,4-dihydroxy-2-naphthoyl-CoA hydrolase from Rippkaea orientalis (strain PCC 8801 / RF-1) (Cyanothece sp. (strain PCC 8801)).